Here is a 1013-residue protein sequence, read N- to C-terminus: PHD finger protein 20-like protein 1 (1013 aa).

Residues 11-71 (ITFEIGARLE…SNRLRPLERP (61 aa)) enclose the Tudor 1 domain. Glycyl lysine isopeptide (Lys-Gly) (interchain with G-Cter in SUMO2) cross-links involve residues K75 and K79. Residues 85-141 (FDFKAGEEVLARWTDCRYYPAKIEAINKEGTFTVQFYDGVIRCLKRMHIKAMPEDAK) form the Tudor 2 domain. Disordered stretches follow at residues 183–206 (AKNK…RDGG), 309–368 (EQAI…TPKS), 389–454 (VINK…QSSV), and 482–511 (VTGS…FANP). Over residues 315 to 346 (KPQSQKKNEAVISSSANTQKPALLSSTLSSGK) the composition is skewed to polar residues. The residue at position 368 (S368) is a Phosphoserine. Residues 404 to 415 (PCKHSERRRRSQ) are compositionally biased toward basic residues. The residue at position 432 (S432) is a Phosphoserine. Residues 443 to 453 (SISSQNQQQSS) show a composition bias toward low complexity. Over residues 496-505 (ECPREEKEET) the composition is skewed to basic and acidic residues. K530 is covalently cross-linked (Glycyl lysine isopeptide (Lys-Gly) (interchain with G-Cter in SUMO2)). Basic and acidic residues predominate over residues 533–565 (KKVKLEEKTSTAFGKRKEKDKEKKEKRDKDHYK). Positions 533–585 (KKVKLEEKTSTAFGKRKEKDKEKKEKRDKDHYKPKQKKKKKKKKKSKQHDYSD) are disordered. Residues 566–579 (PKQKKKKKKKKKSK) show a composition bias toward basic residues. Residues 681-729 (IVRCICELDEENGFMIQCEECLCWQHSVCMGLLEDSIPEQYICYICRDP) form a PHD-type zinc finger. Basic and acidic residues predominate over residues 824-852 (RKITPQDRANSEGKECVQNHKEPALRMEE). A disordered region spans residues 824-911 (RKITPQDRAN…LLYKNRGVSE (88 aa)). Polar residues predominate over residues 854–878 (YITSEHSYQKPQSFSQDCQSLTDPG). The segment covering 879 to 892 (SSDDDDASSFEEDG) has biased composition (acidic residues). N6-acetyllysine is present on K905.

As to quaternary structure, interacts with methylated DNMT1 (DNMT1K142me1). Interacts with SOX2.

It localises to the nucleus. Is a negative regulator of proteasomal degradation of a set of methylated proteins, including DNMT1 and SOX2. Involved in the maintainance of embryonic stem cells pluripotency, through the regulation of SOX2 levels. The polypeptide is PHD finger protein 20-like protein 1 (Phf20l1) (Mus musculus (Mouse)).